A 225-amino-acid polypeptide reads, in one-letter code: Urease subunit alpha (225 aa).

The urease gamma stretch occupies residues 1–102 (MRLTPKELDK…LVTIHNPIED (102 aa)). Residues 103 to 225 (NGKLTPGEYI…ANAAQKHFIH (123 aa)) form a urease beta region.

The protein in the N-terminal section; belongs to the urease gamma subunit family. This sequence in the C-terminal section; belongs to the urease beta subunit family. In terms of assembly, heterohexamer of 3 UreA (alpha) and 3 UreB (beta) subunits.

The protein resides in the cytoplasm. It catalyses the reaction urea + 2 H2O + H(+) = hydrogencarbonate + 2 NH4(+). The protein operates within nitrogen metabolism; urea degradation; CO(2) and NH(3) from urea (urease route): step 1/1. This is Urease subunit alpha from Helicobacter hepaticus (strain ATCC 51449 / 3B1).